The primary structure comprises 155 residues: FUN14 domain-containing protein 1 (155 aa).

Residues 1–47 (MATRNPPPQEYESDDDSYEVLDLTEYARRHHWWNRVFGHSSGPMVEK) lie on the Cytoplasmic side of the membrane. Phosphoserine occurs at positions 13 and 17. Tyr18 is modified (phosphotyrosine; by SRC). Residues 18 to 21 (YEVL) carry the YXXL motif. A helical membrane pass occupies residues 48–68 (YSVATQIVMGGVSGWCAGFLF). Topologically, residues 69 to 74 (QKVGKL) are mitochondrial intermembrane. Residues 75–95 (AATAVGGGFLLLQIASHSGYV) form a helical membrane-spanning segment. Residues 96 to 133 (QIDWKRVEKDVNKAKRQIKKRANKAAPEINNIIEEATE) lie on the Cytoplasmic side of the membrane. Lys119 participates in a covalent cross-link: Glycyl lysine isopeptide (Lys-Gly) (interchain with G-Cter in ubiquitin). A helical transmembrane segment spans residues 134-154 (FVKQNIVISSGFVGGFLLGLA). Position 155 (Ser155) is a topological domain, mitochondrial intermembrane.

This sequence belongs to the FUN14 family. As to quaternary structure, interacts (via YXXL motif) with MAP1 LC3 family proteins MAP1LC3A, MAP1LC3B and GABARAP. Interacts with DNM1L/DPR1. Interacts with GPX4. Post-translationally, phosphorylation at Ser-13 by CK2 and at Tyr-18 by SRC inhibits activation of mitophagy. Following hypoxia, dephosphorylated at Tyr-18, leading to interaction with MAP1 LC3 family proteins and triggering mitophagy. Dephosphorylation is mediated by PGAM5. Phosphorylated by ULK1 at Ser-17 which enhances FUNDC1 binding to LC3. Ubiquitinated on Lys-119. Deubiquitinated by USP19; leading to hypoxia-induced DRP1 oligomerization and GTPase activity.

The protein localises to the mitochondrion outer membrane. Its function is as follows. Integral mitochondrial outer-membrane protein that mediates the formation of mitochondria-associated endoplasmic reticulum membranes (MAMs). In turn, mediates angiogenesis and neoangiogenesis through interference with intracellular Ca(2+) communication and regulation of the vascular endothelial growth factor receptor KDR/VEGFR2 expression at both mRNA and protein levels. Also acts as an activator of hypoxia-induced mitophagy, an important mechanism for mitochondrial quality and homeostasis, by interacting with and recruiting LC3 protein family to mitochondria. Mechanistically, recruits DRP1 at ER-mitochondria contact sites leading to DRP1 oligomerization and GTPase activity to facilitate mitochondrial fission during hypoxia. Additionally, plays a role in hepatic ferroptosis by interacting directly with glutathione peroxidase/GPX4 to facilitate its recruitment into mitochondria through TOM/TIM complex where it is degraded by mitophagy. This is FUN14 domain-containing protein 1 (FUNDC1) from Bos taurus (Bovine).